Consider the following 425-residue polypeptide: Queuine tRNA-ribosyltransferase accessory subunit 2 (425 aa).

Residues 302 to 323 (QNGAQDLEKNSPEEDQEEEVVK) are disordered. Cysteine 351, cysteine 353, cysteine 356, and histidine 382 together coordinate Zn(2+).

This sequence belongs to the queuine tRNA-ribosyltransferase family. QTRT2 subfamily. Heterodimer of a catalytic subunit QTRT1 and an accessory subunit QTRT2. The cofactor is Zn(2+).

It localises to the cytoplasm. The protein localises to the mitochondrion outer membrane. In terms of biological role, non-catalytic subunit of the queuine tRNA-ribosyltransferase (TGT) that catalyzes the base-exchange of a guanine (G) residue with queuine (Q) at position 34 (anticodon wobble position) in tRNAs with GU(N) anticodons (tRNA-Asp, -Asn, -His and -Tyr), resulting in the hypermodified nucleoside queuosine (7-(((4,5-cis-dihydroxy-2-cyclopenten-1-yl)amino)methyl)-7-deazaguanosine). This chain is Queuine tRNA-ribosyltransferase accessory subunit 2, found in Gallus gallus (Chicken).